The chain runs to 60 residues: Large ribosomal subunit protein bL33 (60 aa).

Belongs to the bacterial ribosomal protein bL33 family.

In Chlorobaculum tepidum (strain ATCC 49652 / DSM 12025 / NBRC 103806 / TLS) (Chlorobium tepidum), this protein is Large ribosomal subunit protein bL33.